The sequence spans 170 residues: Macro domain-containing protein DR_2288 (170 aa).

The 170-residue stretch at 1–170 folds into the Macro domain; that stretch reads MPLELVQGDI…HVFERALAQL (170 aa).

The protein belongs to the MacroD-type family.

The chain is Macro domain-containing protein DR_2288 from Deinococcus radiodurans (strain ATCC 13939 / DSM 20539 / JCM 16871 / CCUG 27074 / LMG 4051 / NBRC 15346 / NCIMB 9279 / VKM B-1422 / R1).